Here is a 143-residue protein sequence, read N- to C-terminus: Nuclear transcription factor Y subunit B-4 (143 aa).

Residues 1 to 23 (MSEGFDGTENGGGGGGGGVGKEQ) are disordered. The span at 9 to 20 (ENGGGGGGGGVG) shows a compositional bias: gly residues. A DNA-binding region spans residues 27 to 33 (LPIANIG). The segment at 54–65 (VQECVSEFISFI) is subunit association domain (SAD). The segment covering 117–130 (KGSRASELPVKKDV) has biased composition (basic and acidic residues). Residues 117-143 (KGSRASELPVKKDVVLNGDPGSSFEGM) are disordered.

The protein belongs to the NFYB/HAP3 subunit family. As to quaternary structure, heterotrimeric transcription factor composed of three components, NF-YA, NF-YB and NF-YC. NF-YB and NF-YC must interact and dimerize for NF-YA association and DNA binding. Ubiquitous.

The protein localises to the nucleus. Its function is as follows. Component of the NF-Y/HAP transcription factor complex. The NF-Y complex stimulates the transcription of various genes by recognizing and binding to a CCAAT motif in promoters. May regulate the expression of photosynthetic genes, and may be involved in chloroplast and amyloplast development. In Oryza sativa subsp. japonica (Rice), this protein is Nuclear transcription factor Y subunit B-4 (NFYB4).